We begin with the raw amino-acid sequence, 286 residues long: MNILSIQSWVCYGHVGNASAVFPLQLLGAEVWAVNTVQFSNHTGYGDWTGQVFGGDDIAALMKGIADRGVLPRCDAVLSGYMGSDAIGGAILDAVASVRAANPEALYCCDPVIGDTGRGIFVRPGLPELFRDRAVPTANILTPNQFELEWLTGHHCRTLADARAAVKVLAESMIRQGPRIILVTSLHVAETPSGSLDMLVYENGRFYLLRTPLLPVSINGAGDAIAALFLFHRLDTGDARQALEKAASSVYGLLKRTAEAGSMEILTVAARQEFLTPSTCFYAQIC.

Ser8 contributes to the substrate binding site. 2 residues coordinate ATP: Asp110 and Glu147. Substrate is bound at residue Asp223.

The protein belongs to the pyridoxine kinase family. PdxY subfamily. As to quaternary structure, homodimer. Mg(2+) is required as a cofactor.

It catalyses the reaction pyridoxal + ATP = pyridoxal 5'-phosphate + ADP + H(+). The protein operates within cofactor metabolism; pyridoxal 5'-phosphate salvage; pyridoxal 5'-phosphate from pyridoxal: step 1/1. Pyridoxal kinase involved in the salvage pathway of pyridoxal 5'-phosphate (PLP). Catalyzes the phosphorylation of pyridoxal to PLP. This chain is Pyridoxal kinase PdxY, found in Granulibacter bethesdensis (strain ATCC BAA-1260 / CGDNIH1).